The following is a 253-amino-acid chain: tRNA (guanine-N(1)-)-methyltransferase (253 aa).

S-adenosyl-L-methionine is bound by residues G116 and 136–141 (VGDYIL).

It belongs to the RNA methyltransferase TrmD family. In terms of assembly, homodimer.

It is found in the cytoplasm. It catalyses the reaction guanosine(37) in tRNA + S-adenosyl-L-methionine = N(1)-methylguanosine(37) in tRNA + S-adenosyl-L-homocysteine + H(+). Its function is as follows. Specifically methylates guanosine-37 in various tRNAs. This chain is tRNA (guanine-N(1)-)-methyltransferase, found in Colwellia psychrerythraea (strain 34H / ATCC BAA-681) (Vibrio psychroerythus).